Here is a 448-residue protein sequence, read N- to C-terminus: N-succinylarginine dihydrolase (448 aa).

Residues 19-28, N110, and 137-138 contribute to the substrate site; these read GGLSYGNVAS and HR. Residue E174 is part of the active site. R214 serves as a coordination point for substrate. H250 is a catalytic residue. Residues D252 and N365 each coordinate substrate. The active-site Nucleophile is C371.

It belongs to the succinylarginine dihydrolase family. As to quaternary structure, homodimer.

It catalyses the reaction N(2)-succinyl-L-arginine + 2 H2O + 2 H(+) = N(2)-succinyl-L-ornithine + 2 NH4(+) + CO2. The protein operates within amino-acid degradation; L-arginine degradation via AST pathway; L-glutamate and succinate from L-arginine: step 2/5. Its function is as follows. Catalyzes the hydrolysis of N(2)-succinylarginine into N(2)-succinylornithine, ammonia and CO(2). The protein is N-succinylarginine dihydrolase of Pseudomonas syringae pv. syringae (strain B728a).